A 1379-amino-acid polypeptide reads, in one-letter code: DNA-directed RNA polymerase subunit beta'' (1379 aa).

4 residues coordinate Zn(2+): Cys220, Cys293, Cys300, and Cys303.

It belongs to the RNA polymerase beta' chain family. RpoC2 subfamily. As to quaternary structure, in plastids the minimal PEP RNA polymerase catalytic core is composed of four subunits: alpha, beta, beta', and beta''. When a (nuclear-encoded) sigma factor is associated with the core the holoenzyme is formed, which can initiate transcription. Zn(2+) is required as a cofactor.

The protein localises to the plastid. The protein resides in the chloroplast. The catalysed reaction is RNA(n) + a ribonucleoside 5'-triphosphate = RNA(n+1) + diphosphate. DNA-dependent RNA polymerase catalyzes the transcription of DNA into RNA using the four ribonucleoside triphosphates as substrates. The protein is DNA-directed RNA polymerase subunit beta'' of Barbarea verna (Land cress).